Consider the following 347-residue polypeptide: Transcription factor JunB (347 aa).

Glycyl lysine isopeptide (Lys-Gly) (interchain with G-Cter in SUMO2) cross-links involve residues Lys-4, Lys-33, and Lys-36. The interval Leu-50 to Gly-77 is disordered. A compositionally biased stretch (gly residues) spans Arg-56–Ser-67. Residues Tyr-68–Gly-77 show a composition bias toward polar residues. Lys-81 participates in a covalent cross-link: Glycyl lysine isopeptide (Lys-Gly) (interchain with G-Cter in SUMO2). Phosphothreonine is present on residues Thr-102 and Thr-104. Ser-117 carries the phosphoserine modification. Residue Lys-141 forms a Glycyl lysine isopeptide (Lys-Gly) (interchain with G-Cter in SUMO2) linkage. At Lys-240 the chain carries N6-acetyllysine; alternate. Lys-240 is covalently cross-linked (Glycyl lysine isopeptide (Lys-Gly) (interchain with G-Cter in SUMO1); alternate). Lys-240 participates in a covalent cross-link: Glycyl lysine isopeptide (Lys-Gly) (interchain with G-Cter in SUMO2); alternate. The span at Glu-241–Asp-253 shows a compositional bias: basic and acidic residues. Residues Glu-241 to Pro-260 form a disordered region. At Ser-251 the chain carries Phosphoserine. Position 255 is a phosphothreonine (Thr-255). Ser-259 is subject to Phosphoserine. Residues Arg-268–Arg-295 form a basic motif region. The bZIP domain maps to Arg-268–His-331. A leucine-zipper region spans residues Leu-296 to Leu-324. A Glycyl lysine isopeptide (Lys-Gly) (interchain with G-Cter in SUMO2) cross-link involves residue Lys-343.

The protein belongs to the bZIP family. Jun subfamily. In terms of assembly, binds DNA as a homodimer or as a heterodimer with another member of the Jun/Fos family. Component of an AP-1 transcription factor complex composed of JUN-FOS heterodimers. As part of the AP-1 transcription factor complex, forms heterodimers with FOSB, thereby binding to the AP-1 consensus sequence and stimulating transcription. Interacts with ITCH (via its WW domains). In terms of processing, ubiquitinated by ITCH, leading to its degradation.

It is found in the nucleus. Functionally, transcription factor involved in regulating gene activity following the primary growth factor response. Binds to the DNA sequence 5'-TGA[GC]TCA-3'. Heterodimerizes with proteins of the FOS family to form an AP-1 transcription complex, thereby enhancing its DNA binding activity to an AP-1 consensus sequence and its transcriptional activity. This chain is Transcription factor JunB (JUNB), found in Bos taurus (Bovine).